A 778-amino-acid polypeptide reads, in one-letter code: DEK domain-containing chromatin-associated protein 4 (778 aa).

Disordered regions lie at residues methionine 1–arginine 334 and leucine 475–glutamate 689. Polar residues predominate over residues alanine 14–alanine 26. Composition is skewed to basic and acidic residues over residues glutamate 40–aspartate 95, alanine 121–glycine 153, glutamate 165–asparagine 185, and threonine 209–lysine 243. Positions lysine 191–arginine 300 form a coiled coil. Residues aspartate 244 to aspartate 286 are compositionally biased toward acidic residues. 2 stretches are compositionally biased toward basic and acidic residues: residues lysine 287–lysine 296 and glycine 303–proline 323. A Nuclear localization signal 1 motif is present at residues aspartate 289–lysine 296. Residues proline 489–alanine 496 carry the Nuclear localization signal 2 motif. A compositionally biased stretch (low complexity) spans lysine 491–lysine 502. Positions aspartate 526–lysine 587 form a coiled coil. Composition is skewed to acidic residues over residues aspartate 527–glutamate 553 and serine 560–glutamate 582. The Nuclear localization signal 3 signature appears at proline 618–arginine 625. Residues alanine 621–lysine 631 show a composition bias toward basic residues. Basic and acidic residues predominate over residues lysine 678–glutamate 689. Positions glutamate 685–threonine 740 constitute a DEK-C domain. 2 consecutive DNA-binding regions follow at residues aspartate 703 to aspartate 717 and lysine 732 to glutamine 736. Positions lysine 732 to lysine 766 form a coiled coil. Residues lysine 741 to alanine 778 are disordered. Positions glutamate 745–glutamate 763 are enriched in acidic residues. The span at lysine 764–alanine 778 shows a compositional bias: basic and acidic residues.

As to quaternary structure, interacts with DEK3.

The protein resides in the nucleus. It localises to the nucleolus. Its function is as follows. Chromatin-associated protein which contributes to the modulation of chromatin structure (such as super-helical structure of DNA) and function. Binds to chromatin of protein-coding genes throughout the genome to regulate nucleosome occupancy and chromatin accessibility, and to modulate the expression of target genes. The sequence is that of DEK domain-containing chromatin-associated protein 4 from Arabidopsis thaliana (Mouse-ear cress).